Here is a 462-residue protein sequence, read N- to C-terminus: Argininosuccinate lyase (462 aa).

It belongs to the lyase 1 family. Argininosuccinate lyase subfamily.

The protein resides in the cytoplasm. It carries out the reaction 2-(N(omega)-L-arginino)succinate = fumarate + L-arginine. The protein operates within amino-acid biosynthesis; L-arginine biosynthesis; L-arginine from L-ornithine and carbamoyl phosphate: step 3/3. The protein is Argininosuccinate lyase of Chloroflexus aggregans (strain MD-66 / DSM 9485).